A 190-amino-acid polypeptide reads, in one-letter code: Translation initiation factor IF-3 (190 aa).

It belongs to the IF-3 family. In terms of assembly, monomer.

Its subcellular location is the cytoplasm. IF-3 binds to the 30S ribosomal subunit and shifts the equilibrium between 70S ribosomes and their 50S and 30S subunits in favor of the free subunits, thus enhancing the availability of 30S subunits on which protein synthesis initiation begins. This is Translation initiation factor IF-3 from Prochlorococcus marinus (strain AS9601).